A 247-amino-acid chain; its full sequence is GTP cyclohydrolase 1 type 2 homolog (247 aa).

Residues His63, His64, Asp101, His215, and Glu219 each contribute to the a divalent metal cation site.

Belongs to the GTP cyclohydrolase I type 2/NIF3 family. As to quaternary structure, toroid-shaped homohexamer. In the hexamer, 3 dimers assemble to form a ring-like structure surrounding a central hole.

Its function is as follows. Provides significant protection from radiation damage and may be involved in the degradation of radiation-damaged nucleotides. The chain is GTP cyclohydrolase 1 type 2 homolog (ybgI) from Salmonella typhi.